Here is a 243-residue protein sequence, read N- to C-terminus: Large ribosomal subunit protein uL3 (243 aa).

2 disordered regions span residues 139-164 (VSHR…KMPG) and 218-243 (KPGK…QEGV). At glutamine 151 the chain carries N5-methylglutamine. Residues 231–243 (QTAAAPAAEQEGV) are compositionally biased toward low complexity.

This sequence belongs to the universal ribosomal protein uL3 family. Part of the 50S ribosomal subunit. Forms a cluster with proteins L14 and L19. In terms of processing, methylated by PrmB.

In terms of biological role, one of the primary rRNA binding proteins, it binds directly near the 3'-end of the 23S rRNA, where it nucleates assembly of the 50S subunit. In Rhodopseudomonas palustris (strain BisB18), this protein is Large ribosomal subunit protein uL3.